The chain runs to 409 residues: Ingression protein 1 (409 aa).

The region spanning 1–114 (MSEEVWNGNQ…DPKEGYCTWY (114 aa)) is the C2 domain. A disordered region spans residues 300 to 409 (LSYDEDDDDD…TRKRPPPRLS (110 aa)). The span at 302–313 (YDEDDDDDDEND) shows a compositional bias: acidic residues. A compositionally biased stretch (polar residues) spans 315 to 328 (FYSSSHRVSHNYNQ). Residues 360–377 (LDSSSPNSHPHPSGLNSP) show a composition bias toward low complexity. The span at 384-399 (TTSNSNFNSRKNSMSP) shows a compositional bias: polar residues. Position 392 is a phosphoserine (Ser-392). Residues 400-409 (TRKRPPPRLS) are compositionally biased toward basic residues.

Belongs to the INN1/fic1 family. Interacts with CYK2, CYK3 and IQG1.

It is found in the bud neck. In terms of biological role, required for the ingression of the plasma membrane into the bud neck at the end of cytokinesis, leading to the separation of the mother and daughter cells. Stimulates the synthesis of the primary septum (PS) by CHS2. This Saccharomyces cerevisiae (strain ATCC 204508 / S288c) (Baker's yeast) protein is Ingression protein 1 (INN1).